A 654-amino-acid polypeptide reads, in one-letter code: Probable potassium transport system protein Kup (654 aa).

Transmembrane regions (helical) follow at residues glycine 17–methionine 37, isoleucine 40–tryptophan 60, valine 71–leucine 91, tryptophan 99–proline 119, isoleucine 137–glycine 157, phenylalanine 164–isoleucine 184, leucine 202–glycine 222, isoleucine 240–leucine 260, leucine 281–isoleucine 301, isoleucine 338–phenylalanine 358, glycine 369–leucine 389, tryptophan 394–alanine 414, and glycine 423–alanine 443.

The protein belongs to the HAK/KUP transporter (TC 2.A.72) family.

It localises to the cell inner membrane. The enzyme catalyses K(+)(in) + H(+)(in) = K(+)(out) + H(+)(out). Transport of potassium into the cell. Likely operates as a K(+):H(+) symporter. This Flavobacterium psychrophilum (strain ATCC 49511 / DSM 21280 / CIP 103535 / JIP02/86) protein is Probable potassium transport system protein Kup.